We begin with the raw amino-acid sequence, 156 residues long: ATP synthase subunit b (156 aa).

The helical transmembrane segment at 7 to 27 (LIGQTVAFIIFVWFCMKFVWP) threads the bilayer.

Belongs to the ATPase B chain family. As to quaternary structure, F-type ATPases have 2 components, F(1) - the catalytic core - and F(0) - the membrane proton channel. F(1) has five subunits: alpha(3), beta(3), gamma(1), delta(1), epsilon(1). F(0) has three main subunits: a(1), b(2) and c(10-14). The alpha and beta chains form an alternating ring which encloses part of the gamma chain. F(1) is attached to F(0) by a central stalk formed by the gamma and epsilon chains, while a peripheral stalk is formed by the delta and b chains.

It localises to the cell inner membrane. F(1)F(0) ATP synthase produces ATP from ADP in the presence of a proton or sodium gradient. F-type ATPases consist of two structural domains, F(1) containing the extramembraneous catalytic core and F(0) containing the membrane proton channel, linked together by a central stalk and a peripheral stalk. During catalysis, ATP synthesis in the catalytic domain of F(1) is coupled via a rotary mechanism of the central stalk subunits to proton translocation. In terms of biological role, component of the F(0) channel, it forms part of the peripheral stalk, linking F(1) to F(0). In Shewanella baltica (strain OS155 / ATCC BAA-1091), this protein is ATP synthase subunit b.